The following is a 428-amino-acid chain: Trigger factor (428 aa).

One can recognise a PPIase FKBP-type domain in the interval Gly163 to Pro248.

Belongs to the FKBP-type PPIase family. Tig subfamily.

Its subcellular location is the cytoplasm. The catalysed reaction is [protein]-peptidylproline (omega=180) = [protein]-peptidylproline (omega=0). Functionally, involved in protein export. Acts as a chaperone by maintaining the newly synthesized protein in an open conformation. Functions as a peptidyl-prolyl cis-trans isomerase. This chain is Trigger factor, found in Anoxybacillus flavithermus (strain DSM 21510 / WK1).